The primary structure comprises 229 residues: Heptaprenylglyceryl phosphate synthase (229 aa).

Lys-12 contacts sn-glycerol 1-phosphate. Residues Asp-14 and Ser-40 each contribute to the Mg(2+) site. Sn-glycerol 1-phosphate is bound by residues 159-164 (YLEYSG), Gly-189, and 209-210 (GN).

The protein belongs to the GGGP/HepGP synthase family. Group I subfamily. In terms of assembly, homodimer. Mg(2+) is required as a cofactor.

The enzyme catalyses sn-glycerol 1-phosphate + all-trans-heptaprenyl diphosphate = 3-heptaprenyl-sn-glycero-1-phosphate + diphosphate. It functions in the pathway membrane lipid metabolism; glycerophospholipid metabolism. Its function is as follows. Prenyltransferase that catalyzes in vivo the transfer of the heptaprenyl moiety of heptaprenyl pyrophosphate (HepPP; 35 carbon atoms) to the C3 hydroxyl of sn-glycerol-1-phosphate (G1P), producing heptaprenylglyceryl phosphate (HepGP). This reaction is an ether-bond-formation step in the biosynthesis of archaea-type G1P-based membrane lipids found in Bacillales. This Bacillus cereus (strain G9842) protein is Heptaprenylglyceryl phosphate synthase.